A 466-amino-acid polypeptide reads, in one-letter code: 3-isopropylmalate dehydratase large subunit (466 aa).

C347, C407, and C410 together coordinate [4Fe-4S] cluster.

Belongs to the aconitase/IPM isomerase family. LeuC type 1 subfamily. In terms of assembly, heterodimer of LeuC and LeuD. It depends on [4Fe-4S] cluster as a cofactor.

The enzyme catalyses (2R,3S)-3-isopropylmalate = (2S)-2-isopropylmalate. It functions in the pathway amino-acid biosynthesis; L-leucine biosynthesis; L-leucine from 3-methyl-2-oxobutanoate: step 2/4. Catalyzes the isomerization between 2-isopropylmalate and 3-isopropylmalate, via the formation of 2-isopropylmaleate. The protein is 3-isopropylmalate dehydratase large subunit of Shewanella halifaxensis (strain HAW-EB4).